The chain runs to 79 residues: Acyl carrier protein (79 aa).

The 76-residue stretch at 2–77 folds into the Carrier domain; it reads DNIEQRVKKI…LAIDFAKSKA (76 aa). Position 37 is an O-(pantetheine 4'-phosphoryl)serine (Ser37).

Belongs to the acyl carrier protein (ACP) family. 4'-phosphopantetheine is transferred from CoA to a specific serine of apo-ACP by AcpS. This modification is essential for activity because fatty acids are bound in thioester linkage to the sulfhydryl of the prosthetic group.

It localises to the cytoplasm. Its pathway is lipid metabolism; fatty acid biosynthesis. Carrier of the growing fatty acid chain in fatty acid biosynthesis. This is Acyl carrier protein from Polynucleobacter necessarius subsp. necessarius (strain STIR1).